A 235-amino-acid chain; its full sequence is Small ribosomal subunit protein uS3 (235 aa).

The 69-residue stretch at 39-107 folds into the KH type-2 domain; the sequence is IRTYIENELK…ETHLNIVEVR (69 aa). Residues 215 to 235 form a disordered region; sequence SERRAVEGAGDGGGQRRRENA.

The protein belongs to the universal ribosomal protein uS3 family. As to quaternary structure, part of the 30S ribosomal subunit. Forms a tight complex with proteins S10 and S14.

Functionally, binds the lower part of the 30S subunit head. Binds mRNA in the 70S ribosome, positioning it for translation. This is Small ribosomal subunit protein uS3 from Chelativorans sp. (strain BNC1).